Consider the following 197-residue polypeptide: Phosphoheptose isomerase (197 aa).

One can recognise an SIS domain in the interval 34–196 (MVHCLLGGNK…DRTLFPQDEQ (163 aa)). 49–51 (NGG) contacts substrate. His-58 and Glu-62 together coordinate Zn(2+). Substrate is bound by residues Glu-62, 91–92 (ND), 117–119 (STS), Ser-122, and Gln-172. Positions 172 and 180 each coordinate Zn(2+).

It belongs to the SIS family. GmhA subfamily. In terms of assembly, homotetramer. The cofactor is Zn(2+).

It is found in the cytoplasm. It catalyses the reaction 2 D-sedoheptulose 7-phosphate = D-glycero-alpha-D-manno-heptose 7-phosphate + D-glycero-beta-D-manno-heptose 7-phosphate. The protein operates within carbohydrate biosynthesis; D-glycero-D-manno-heptose 7-phosphate biosynthesis; D-glycero-alpha-D-manno-heptose 7-phosphate and D-glycero-beta-D-manno-heptose 7-phosphate from sedoheptulose 7-phosphate: step 1/1. In terms of biological role, catalyzes the isomerization of sedoheptulose 7-phosphate in D-glycero-D-manno-heptose 7-phosphate. In Shewanella sediminis (strain HAW-EB3), this protein is Phosphoheptose isomerase.